The sequence spans 202 residues: Transcription factor IBH1 (202 aa).

Positions 1-16 are enriched in pro residues; it reads MDAKRTPPPPTPPNPN. The interval 1–33 is disordered; sequence MDAKRTPPPPTPPNPNPSVIGSGAAADGGGFGR. The region spanning 136 to 185 is the bHLH domain; it reads TSAAARAVPPPPRQQGEPPRADALRRLVPGGAGMEYSSLLEETADYLRSL.

It belongs to the bHLH protein family. Interacts with ILI1.

Atypical and probable non DNA-binding bHLH transcription factor that acts as a negative regulator of cell elongation and plant development. Binds the transcription factor ILI1 and forms a heterodimer of antagonistic bHLH transcription factors that function downstream of BZR1 to mediate brassinosteroid regulation of cell elongation and lamina inclination. The sequence is that of Transcription factor IBH1 (IBH1) from Oryza sativa subsp. indica (Rice).